We begin with the raw amino-acid sequence, 75 residues long: MTEKLIEQLEARINDLECQVAFQEQTIEDLNSALSQQQLQITKMQDQMKYVVGKVKNMDSSNMEDPANEPPPPHY.

Residues 56–75 are disordered; sequence KNMDSSNMEDPANEPPPPHY.

Belongs to the SlyX family.

This is Protein SlyX homolog from Vibrio parahaemolyticus serotype O3:K6 (strain RIMD 2210633).